A 207-amino-acid chain; its full sequence is Outer-membrane lipoprotein carrier protein (207 aa).

The signal sequence occupies residues 1–23 (MMKPHNLFQFLAVCSLTVAVASA).

It belongs to the LolA family. Monomer.

It is found in the periplasm. Functionally, participates in the translocation of lipoproteins from the inner membrane to the outer membrane. Only forms a complex with a lipoprotein if the residue after the N-terminal Cys is not an aspartate (The Asp acts as a targeting signal to indicate that the lipoprotein should stay in the inner membrane). In Neisseria gonorrhoeae (strain ATCC 700825 / FA 1090), this protein is Outer-membrane lipoprotein carrier protein.